The primary structure comprises 147 residues: Hemoglobin subunit gamma-2 (147 aa).

One can recognise a Globin domain in the interval 3-147; that stretch reads NFTAEDKAAI…VASALGSRYH (145 aa). At Thr-13 the chain carries Phosphothreonine. Phosphoserine is present on residues Ser-45, Ser-51, and Ser-53. Lys-60 is subject to N6-acetyllysine. His-64 contacts heme b. Lys-83 bears the N6-acetyllysine mark. His-93 lines the heme b pocket. Residue Cys-94 is modified to S-nitrosocysteine. Phosphoserine is present on residues Ser-140 and Ser-144.

It belongs to the globin family. Heterotetramer of two alpha chains and two gamma chains in fetal hemoglobin (Hb F). In terms of tissue distribution, red blood cells.

In terms of biological role, gamma chains make up the fetal hemoglobin F, in combination with alpha chains. This Cebus albifrons (White-fronted capuchin) protein is Hemoglobin subunit gamma-2 (HBG2).